We begin with the raw amino-acid sequence, 477 residues long: Ribulose bisphosphate carboxylase large chain (477 aa).

Residues 1-2 constitute a propeptide that is removed on maturation; the sequence is MS. Pro3 carries the post-translational modification N-acetylproline. Lys14 carries the N6,N6,N6-trimethyllysine modification. 2 residues coordinate substrate: Asn123 and Thr173. Catalysis depends on Lys175, which acts as the Proton acceptor. Lys177 serves as a coordination point for substrate. Lys201, Asp203, and Glu204 together coordinate Mg(2+). An N6-carboxylysine modification is found at Lys201. Catalysis depends on His294, which acts as the Proton acceptor. Residues Arg295, His327, and Ser379 each coordinate substrate.

Belongs to the RuBisCO large chain family. Type I subfamily. Heterohexadecamer of 8 large chains and 8 small chains; disulfide-linked. The disulfide link is formed within the large subunit homodimers. Mg(2+) is required as a cofactor. In terms of processing, the disulfide bond which can form in the large chain dimeric partners within the hexadecamer appears to be associated with oxidative stress and protein turnover.

The protein resides in the plastid. It is found in the chloroplast. It catalyses the reaction 2 (2R)-3-phosphoglycerate + 2 H(+) = D-ribulose 1,5-bisphosphate + CO2 + H2O. The enzyme catalyses D-ribulose 1,5-bisphosphate + O2 = 2-phosphoglycolate + (2R)-3-phosphoglycerate + 2 H(+). Functionally, ruBisCO catalyzes two reactions: the carboxylation of D-ribulose 1,5-bisphosphate, the primary event in carbon dioxide fixation, as well as the oxidative fragmentation of the pentose substrate in the photorespiration process. Both reactions occur simultaneously and in competition at the same active site. This Solanum bulbocastanum (Wild potato) protein is Ribulose bisphosphate carboxylase large chain.